A 166-amino-acid polypeptide reads, in one-letter code: Interferon gamma (166 aa).

An N-terminal signal peptide occupies residues 1–23 (MKYTSSFLALLLCVLLGFSGSYG). Gln-24 is modified (pyrrolidone carboxylic acid). Asn-39 and Asn-106 each carry an N-linked (GlcNAc...) asparagine glycan.

It belongs to the type II (or gamma) interferon family. In terms of assembly, homodimer. Interacts with IFNGR1 (via extracellular domain); this interaction promotes IFNGR1 dimerization. In terms of tissue distribution, released primarily from activated T lymphocytes.

It localises to the secreted. Functionally, type II interferon produced by immune cells such as T-cells and NK cells that plays crucial roles in antimicrobial, antiviral, and antitumor responses by activating effector immune cells and enhancing antigen presentation. Primarily signals through the JAK-STAT pathway after interaction with its receptor IFNGR1 to affect gene regulation. Upon IFNG binding, IFNGR1 intracellular domain opens out to allow association of downstream signaling components JAK2, JAK1 and STAT1, leading to STAT1 activation, nuclear translocation and transcription of IFNG-regulated genes. Many of the induced genes are transcription factors such as IRF1 that are able to further drive regulation of a next wave of transcription. Plays a role in class I antigen presentation pathway by inducing a replacement of catalytic proteasome subunits with immunoproteasome subunits. In turn, increases the quantity, quality, and repertoire of peptides for class I MHC loading. Increases the efficiency of peptide generation also by inducing the expression of activator PA28 that associates with the proteasome and alters its proteolytic cleavage preference. Up-regulates as well MHC II complexes on the cell surface by promoting expression of several key molecules such as cathepsins B/CTSB, H/CTSH, and L/CTSL. Participates in the regulation of hematopoietic stem cells during development and under homeostatic conditions by affecting their development, quiescence, and differentiation. In Ovis aries (Sheep), this protein is Interferon gamma (IFNG).